Reading from the N-terminus, the 251-residue chain is MDFPSIKIKDFEGPFDLLLHLIKKNQMDIYNVEISKITNQYLKYIDDMKFMDLEITSEFIVVAATLIEIKSKHLLPKIKKDEDEDEEDQEKNLIEKLILYKKIKRVAEFFKDRYVNSGELYTKKPEIIEEINLPNNNEDIFKNLTLLELYNMYNNLLEIYNNKQNKANVIQKRIYVDKYKIEDKLEYLLGLIENNEVSKFSEIIDKCECKLECIVSFLALLEMVKLKKVRVYQSDSFDNILIERRQDEGEE.

Belongs to the ScpA family. In terms of assembly, component of a cohesin-like complex composed of ScpA, ScpB and the Smc homodimer, in which ScpA and ScpB bind to the head domain of Smc. The presence of the three proteins is required for the association of the complex with DNA.

The protein localises to the cytoplasm. Its function is as follows. Participates in chromosomal partition during cell division. May act via the formation of a condensin-like complex containing Smc and ScpB that pull DNA away from mid-cell into both cell halves. This Clostridium botulinum (strain Eklund 17B / Type B) protein is Segregation and condensation protein A.